A 217-amino-acid polypeptide reads, in one-letter code: MVVIGEKFPEVEVITTHGKLKLPEHYIEAGKWFVLFSHPGDFTPVCTTEFVAFQKRYDQFRSLNTELIGLSIDQVFSHIKWVEWIKEKLDVDIEFPIIADDRGELAVKLGMISPYKGNNTVRAVFVVDATGTIRAIIYYPQEVGRNMDEVVRLVKALQTADKGYATPANWPENDFLNEKVIVPPANNMDARKNRLEACKSGELEGYDWWFCYTDLKE.

Residues 2 to 159 enclose the Thioredoxin domain; sequence VVIGEKFPEV…VVRLVKALQT (158 aa). C46 functions as the Cysteine sulfenic acid (-SOH) intermediate in the catalytic mechanism. R122 contacts substrate.

Belongs to the peroxiredoxin family. Prx6 subfamily. As to quaternary structure, homodecamer. Pentamer of dimers that assemble into a ring structure.

Its subcellular location is the cytoplasm. It carries out the reaction a hydroperoxide + [thioredoxin]-dithiol = an alcohol + [thioredoxin]-disulfide + H2O. Thiol-specific peroxidase that catalyzes the reduction of hydrogen peroxide and organic hydroperoxides to water and alcohols, respectively. Plays a role in cell protection against oxidative stress by detoxifying peroxides. This chain is Peroxiredoxin, found in Methanococcus maripaludis (strain C5 / ATCC BAA-1333).